Consider the following 1162-residue polypeptide: Sialidase (1162 aa).

BNR repeat units follow at residues 23 to 34 (KYSVDDGETWET), 163 to 174 (FYSEDDGKTWKF), and 209 to 220 (YESSDMEKPWVE). N-linked (GlcNAc...) asparagine glycans are attached at residues N342 and N394. Residues 587-1123 (HMDSSSDSSA…STPSTPAGSS (537 aa)) are disordered. A compositionally biased stretch (low complexity) spans 589–615 (DSSSDSSAHSTPSTPADSSAHSTPSTP). A 44 X 12 AA tandem repeats, LTR domain region spans residues 589–1120 (DSSSDSSAHS…SAHSTPSTPA (532 aa)). 2 stretches are compositionally biased toward polar residues: residues 616-689 (VDSS…TPVD) and 699-1123 (PADS…AGSS). N1125 is a glycosylation site (N-linked (GlcNAc...) asparagine).

The protein belongs to the glycosyl hydrolase 33 family.

It is found in the cell membrane. The enzyme catalyses Hydrolysis of alpha-(2-&gt;3)-, alpha-(2-&gt;6)-, alpha-(2-&gt;8)- glycosidic linkages of terminal sialic acid residues in oligosaccharides, glycoproteins, glycolipids, colominic acid and synthetic substrates.. In terms of biological role, developmentally regulated neuraminidase implicated in parasite invasion of cells. This chain is Sialidase (TCNA), found in Trypanosoma cruzi.